Reading from the N-terminus, the 461-residue chain is ATP synthase subunit beta (461 aa).

151 to 158 (GGAGVGKT) serves as a coordination point for ATP.

Belongs to the ATPase alpha/beta chains family. F-type ATPases have 2 components, CF(1) - the catalytic core - and CF(0) - the membrane proton channel. CF(1) has five subunits: alpha(3), beta(3), gamma(1), delta(1), epsilon(1). CF(0) has three main subunits: a(1), b(2) and c(9-12). The alpha and beta chains form an alternating ring which encloses part of the gamma chain. CF(1) is attached to CF(0) by a central stalk formed by the gamma and epsilon chains, while a peripheral stalk is formed by the delta and b chains.

It localises to the cell inner membrane. The catalysed reaction is ATP + H2O + 4 H(+)(in) = ADP + phosphate + 5 H(+)(out). Produces ATP from ADP in the presence of a proton gradient across the membrane. The catalytic sites are hosted primarily by the beta subunits. In Coxiella burnetii (strain RSA 331 / Henzerling II), this protein is ATP synthase subunit beta.